A 474-amino-acid polypeptide reads, in one-letter code: PRAME family member 10 (474 aa).

One copy of the LRR 1; degenerate repeat lies at 97 to 124; sequence RWKLQVLDLRDVDENFWTIWSGARVLSC. The LRR 2; degenerate repeat unit spans residues 179 to 203; it reads HLCCSKVQNYSMPTSSFRNLLERIY. An LRR 3; degenerate repeat occupies 204–230; that stretch reads PDSIQELEVWKKCSLNKTGKFAPYLSQ. An LRR 4; degenerate repeat occupies 231–265; sequence MSNLRELFLAFGYERELYVSVQWPCIPDLDSPFLC. LRR repeat units lie at residues 266 to 291, 292 to 323, 324 to 342, 348 to 375, and 376 to 400; these read LYYP…LRYL, KNPL…SQLK, ELRL…PLGV, AATL…ALSH, and CSQL…LLRH.

Belongs to the PRAME family.

This chain is PRAME family member 10, found in Homo sapiens (Human).